A 222-amino-acid chain; its full sequence is MFSFKVSRWMGLACFRSLAASSPSIRQKKLMHKLQEEKAFREEMKIFREKIEDFREEMWTFRGKIHAFRGQILGFWEEERPFWEEEKTFWKEEKSFWEMEKSFREEEKTFWKKYRTFWKEDKAFWKEDNALWERDRNLLQEDKALWEEEKALWVEERALLEGEKALWEDKTSLWEEENALWEEERAFWMENNGHIAGEQMLEDGPHNANRGQRLLAFSRGRA.

Residues Asn129–Trp153 are a coiled coil.

In Homo sapiens (Human), this protein is Coiled-coil domain-containing protein 70.